Reading from the N-terminus, the 234-residue chain is Adenosine 5'-phosphosulfate reductase (234 aa).

The [4Fe-4S] cluster site is built by Cys120, Cys121, Cys203, and Cys206. Cys229 functions as the Nucleophile; cysteine thiosulfonate intermediate in the catalytic mechanism.

Belongs to the PAPS reductase family. CysH subfamily. The cofactor is [4Fe-4S] cluster.

It localises to the cytoplasm. The enzyme catalyses [thioredoxin]-disulfide + sulfite + AMP + 2 H(+) = adenosine 5'-phosphosulfate + [thioredoxin]-dithiol. It functions in the pathway sulfur metabolism; hydrogen sulfide biosynthesis; sulfite from sulfate. Its function is as follows. Catalyzes the formation of sulfite from adenosine 5'-phosphosulfate (APS) using thioredoxin as an electron donor. The chain is Adenosine 5'-phosphosulfate reductase from Bacillus cereus (strain Q1).